The primary structure comprises 617 residues: Proline--tRNA ligase (617 aa).

Belongs to the class-II aminoacyl-tRNA synthetase family. ProS type 1 subfamily. In terms of assembly, homodimer.

Its subcellular location is the cytoplasm. It catalyses the reaction tRNA(Pro) + L-proline + ATP = L-prolyl-tRNA(Pro) + AMP + diphosphate. Catalyzes the attachment of proline to tRNA(Pro) in a two-step reaction: proline is first activated by ATP to form Pro-AMP and then transferred to the acceptor end of tRNA(Pro). As ProRS can inadvertently accommodate and process non-cognate amino acids such as alanine and cysteine, to avoid such errors it has two additional distinct editing activities against alanine. One activity is designated as 'pretransfer' editing and involves the tRNA(Pro)-independent hydrolysis of activated Ala-AMP. The other activity is designated 'posttransfer' editing and involves deacylation of mischarged Ala-tRNA(Pro). The misacylated Cys-tRNA(Pro) is not edited by ProRS. This Streptococcus pneumoniae (strain Hungary19A-6) protein is Proline--tRNA ligase.